The chain runs to 99 residues: Large ribosomal subunit protein uL23 (99 aa).

Belongs to the universal ribosomal protein uL23 family. Part of the 50S ribosomal subunit. Contacts protein L29, and trigger factor when it is bound to the ribosome.

Its function is as follows. One of the early assembly proteins it binds 23S rRNA. One of the proteins that surrounds the polypeptide exit tunnel on the outside of the ribosome. Forms the main docking site for trigger factor binding to the ribosome. The sequence is that of Large ribosomal subunit protein uL23 from Lachnoclostridium phytofermentans (strain ATCC 700394 / DSM 18823 / ISDg) (Clostridium phytofermentans).